We begin with the raw amino-acid sequence, 192 residues long: Pyridoxal 5'-phosphate synthase subunit PdxT (192 aa).

53-55 (GES) contributes to the L-glutamine binding site. Catalysis depends on cysteine 82, which acts as the Nucleophile. L-glutamine-binding positions include arginine 108 and 134–135 (IR). Residues histidine 170 and glutamate 172 each act as charge relay system in the active site.

Belongs to the glutaminase PdxT/SNO family. In terms of assembly, in the presence of PdxS, forms a dodecamer of heterodimers. Only shows activity in the heterodimer.

The catalysed reaction is aldehydo-D-ribose 5-phosphate + D-glyceraldehyde 3-phosphate + L-glutamine = pyridoxal 5'-phosphate + L-glutamate + phosphate + 3 H2O + H(+). It catalyses the reaction L-glutamine + H2O = L-glutamate + NH4(+). The protein operates within cofactor biosynthesis; pyridoxal 5'-phosphate biosynthesis. Its function is as follows. Catalyzes the hydrolysis of glutamine to glutamate and ammonia as part of the biosynthesis of pyridoxal 5'-phosphate. The resulting ammonia molecule is channeled to the active site of PdxS. This Methanosphaera stadtmanae (strain ATCC 43021 / DSM 3091 / JCM 11832 / MCB-3) protein is Pyridoxal 5'-phosphate synthase subunit PdxT.